The sequence spans 175 residues: ATP synthase subunit delta (175 aa).

Belongs to the ATPase delta chain family. In terms of assembly, F-type ATPases have 2 components, F(1) - the catalytic core - and F(0) - the membrane proton channel. F(1) has five subunits: alpha(3), beta(3), gamma(1), delta(1), epsilon(1). F(0) has three main subunits: a(1), b(2) and c(10-14). The alpha and beta chains form an alternating ring which encloses part of the gamma chain. F(1) is attached to F(0) by a central stalk formed by the gamma and epsilon chains, while a peripheral stalk is formed by the delta and b chains.

The protein localises to the cell inner membrane. Functionally, f(1)F(0) ATP synthase produces ATP from ADP in the presence of a proton or sodium gradient. F-type ATPases consist of two structural domains, F(1) containing the extramembraneous catalytic core and F(0) containing the membrane proton channel, linked together by a central stalk and a peripheral stalk. During catalysis, ATP synthesis in the catalytic domain of F(1) is coupled via a rotary mechanism of the central stalk subunits to proton translocation. In terms of biological role, this protein is part of the stalk that links CF(0) to CF(1). It either transmits conformational changes from CF(0) to CF(1) or is implicated in proton conduction. The protein is ATP synthase subunit delta of Xanthomonas campestris pv. campestris (strain 8004).